Consider the following 492-residue polypeptide: Probable proline dehydrogenase, mitochondrial (492 aa).

This sequence belongs to the proline oxidase family. It depends on FAD as a cofactor.

Its subcellular location is the mitochondrion. The catalysed reaction is L-proline + a quinone = (S)-1-pyrroline-5-carboxylate + a quinol + H(+). Functionally, converts proline to delta-1-pyrroline-5-carboxylate. The sequence is that of Probable proline dehydrogenase, mitochondrial from Schizosaccharomyces pombe (strain 972 / ATCC 24843) (Fission yeast).